The sequence spans 787 residues: LPS-assembly protein LptD (787 aa).

Residues 1–78 form a disordered region; the sequence is MAAGLPPLVV…AAGAAPAESG (78 aa). Low complexity predominate over residues 59-78; that stretch reads LPPVGTPAEPAAGAAPAESG.

This sequence belongs to the LptD family. In terms of assembly, component of the lipopolysaccharide transport and assembly complex. Interacts with LptE and LptA.

Functionally, together with LptE, is involved in the assembly of lipopolysaccharide (LPS) at the surface of the outer membrane. This is LPS-assembly protein LptD from Aromatoleum aromaticum (strain DSM 19018 / LMG 30748 / EbN1) (Azoarcus sp. (strain EbN1)).